A 518-amino-acid chain; its full sequence is Endoglucanase 18 (518 aa).

Over 1 to 35 the chain is Cytoplasmic; it reads MANCVRCCCWLLVLMLMALAITAAVVFVRYKNGEG. A helical membrane pass occupies residues 36–56; the sequence is VFPFPGVPGAVDHKYADALAV. The Extracellular portion of the chain corresponds to 57 to 518; the sequence is ALQFFQVQKS…STSSLARSLS (462 aa). The N-linked (GlcNAc...) asparagine glycan is linked to Asn71. Asp101 acts as the Nucleophile in catalysis. 3 N-linked (GlcNAc...) asparagine glycosylation sites follow: Asn214, Asn251, and Asn272. The active site involves His436. N-linked (GlcNAc...) asparagine glycosylation is present at Asn477. Residues Asp482 and Glu491 contribute to the active site.

It belongs to the glycosyl hydrolase 9 (cellulase E) family.

It is found in the membrane. The catalysed reaction is Endohydrolysis of (1-&gt;4)-beta-D-glucosidic linkages in cellulose, lichenin and cereal beta-D-glucans.. This Oryza sativa subsp. japonica (Rice) protein is Endoglucanase 18.